Consider the following 72-residue polypeptide: Translation initiation factor IF-1 (72 aa).

One can recognise an S1-like domain in the interval 2 to 72 (AKDDVIEVEG…TRGRITYRYK (71 aa)). Tyr-60 is subject to Phosphotyrosine.

Belongs to the IF-1 family. Component of the 30S ribosomal translation pre-initiation complex which assembles on the 30S ribosome in the order IF-2 and IF-3, IF-1 and N-formylmethionyl-tRNA(fMet); mRNA recruitment can occur at any time during PIC assembly.

It localises to the cytoplasm. Functionally, one of the essential components for the initiation of protein synthesis. Stabilizes the binding of IF-2 and IF-3 on the 30S subunit to which N-formylmethionyl-tRNA(fMet) subsequently binds. Helps modulate mRNA selection, yielding the 30S pre-initiation complex (PIC). Upon addition of the 50S ribosomal subunit IF-1, IF-2 and IF-3 are released leaving the mature 70S translation initiation complex. The sequence is that of Translation initiation factor IF-1 from Bacillus subtilis (strain 168).